The sequence spans 800 residues: Nuclear cap-binding protein subunit 1 (800 aa).

The interval 1 to 26 is disordered; the sequence is MSRRRAHDTEDEGYDHRRNKRRRVSE. T9 carries the post-translational modification Phosphothreonine. Residues 31 to 243 form the MIF4G domain; it reads EDRLESLILR…CLWAQIRKLR (213 aa). A disordered region spans residues 669 to 700; it reads LAKADSSSSDSEDDSSHKRKKPITHADKPSEE.

This sequence belongs to the NCBP1 family. Component of the nuclear cap-binding complex (CBC), a heterodimer composed of Cbp80 and Cbp20 that interacts with m7GpppG-capped RNA.

The protein localises to the nucleus. In terms of biological role, component of the cap-binding complex (CBC), which binds cotranscriptionally to the 5'-cap of pre-mRNAs and is involved in various processes such as pre-mRNA splicing and RNA-mediated gene silencing (RNAi). The CBC complex is involved in miRNA-mediated RNA interference via its interaction with Ars2 and is required for primary microRNAs (miRNAs) processing. Also involved in innate immunity via the short interfering RNAs (siRNAs) processing machinery by restricting the viral RNA production. In the CBC complex, Cbp80 does not bind directly capped RNAs (m7GpppG-capped RNA) but is required to stabilize the movement of the N-terminal loop of Cbp20 and lock the CBC into a high affinity cap-binding state with the cap structure. This is Nuclear cap-binding protein subunit 1 (Cbp80) from Drosophila yakuba (Fruit fly).